The chain runs to 127 residues: Histone H2B type 1-A (127 aa).

An N-acetylproline modification is found at Pro2. Lys7, Lys13, Lys14, Lys17, Lys18, Lys22, and Lys25 each carry N6-acetyllysine; alternate. 8 positions are modified to N6-crotonyllysine; alternate: Lys7, Lys13, Lys14, Lys17, Lys18, Lys22, Lys25, and Lys36. 2 positions are modified to N6-lactoyllysine; alternate: Lys7 and Lys13. Lys7 is covalently cross-linked (Glycyl lysine isopeptide (Lys-Gly) (interchain with G-Cter in SUMO2); alternate). Residues Lys17, Lys18, Lys22, and Lys25 each carry the N6-lactoyllysine; alternate modification. Lys22 participates in a covalent cross-link: Glycyl lysine isopeptide (Lys-Gly) (interchain with G-Cter in SUMO2); alternate. Lys36 bears the N6-succinyllysine; alternate mark. Lys36 is covalently cross-linked (Glycyl lysine isopeptide (Lys-Gly) (interchain with G-Cter in ubiquitin); alternate). A Phosphoserine modification is found at Ser38. Lys45 is modified (N6-lactoyllysine; alternate). Lys48 is subject to N6-methyllysine. At Lys59 the chain carries N6,N6-dimethyllysine. Arg81 is modified (dimethylated arginine). Residue Lys87 is modified to N6-acetyllysine; alternate. At Lys87 the chain carries N6-lactoyllysine; alternate. Position 87 is an N6,N6,N6-trimethyllysine; alternate (Lys87). Omega-N-methylarginine occurs at positions 88 and 94. At Lys110 the chain carries N6-lactoyllysine; alternate. Position 110 is an N6-methyllysine (Lys110). At Thr117 the chain carries Phosphothreonine. An N6-lactoyllysine; alternate mark is found at Lys118 and Lys122. An N6-succinyllysine; alternate mark is found at Lys118 and Lys122. Lys118 is modified (N6-methylated lysine; alternate). Lys122 participates in a covalent cross-link: Glycyl lysine isopeptide (Lys-Gly) (interchain with G-Cter in ubiquitin); alternate.

The protein belongs to the histone H2B family. In terms of assembly, the nucleosome is a histone octamer containing two molecules each of H2A, H2B, H3 and H4 assembled in one H3-H4 heterotetramer and two H2A-H2B heterodimers. Interacts with H2AB1; preferentially dimerizes with H2AB1 to form nucleosomes. Post-translationally, monoubiquitination at Lys-36 by the MSL1/MSL2 dimer is required for histone H3 'Lys-4' (H3K4me) and 'Lys-79' (H3K79me) methylation and transcription activation at specific gene loci, such as HOXA9 and MEIS1 loci. Similarly, monoubiquitination of Lys-122 (H2BK120Ub) by the RNF20/40 complex gives a specific tag for epigenetic transcriptional activation and is also prerequisite for histone H3 'Lys-4' and 'Lys-79' methylation. It also functions cooperatively with the FACT dimer to stimulate elongation by RNA polymerase II. H2BK120Ub also acts as a regulator of mRNA splicing: deubiquitination by USP49 is required for efficient cotranscriptional splicing of a large set of exons. Crotonylation (Kcr) is specifically present in male germ cells and marks testis-specific genes in post-meiotic cells, including X-linked genes that escape sex chromosome inactivation in haploid cells. Crotonylation marks active promoters and enhancers and confers resistance to transcriptional repressors. It is also associated with post-meiotically activated genes on autosomes. In terms of processing, acetylated during spermatogenesis. Acetylated form is most abundant in spermatogonia compared to spermatocytes and round spermatids. Post-translationally, phosphorylated at Thr-117 in spermatogonia, spermatocytes and round spermatids. Methylated at Lys-118 in spermatogonia, spermatocytes and round spermatids. In terms of processing, lactylated in macrophages by EP300/P300 by using lactoyl-CoA directly derived from endogenous or exogenous lactate, leading to stimulates gene transcription. Mainly expressed in testis, and the corresponding protein is also present in mature sperm. Also present in metaphase oocytes (at protein level).

Its subcellular location is the nucleus. The protein resides in the chromosome. Its function is as follows. Variant histone specifically required to direct the transformation of dissociating nucleosomes to protamine in male germ cells. Entirely replaces classical histone H2B prior nucleosome to protamine transition and probably acts as a nucleosome dissociating factor that creates a more dynamic chromatin, facilitating the large-scale exchange of histones. In condensing spermatids, the heterodimer between H2AB1 and H2BC1/TH2B is loaded onto the nucleosomes and promotes loading of transition proteins (TNP1 and TNP2) onto the nucleosomes. Inclusion of the H2AB1-H2BC1/TH2B dimer into chromatin opens the nucleosomes, releasing the nucleosomal DNA ends and allowing the invasion of nucleosomes by transition proteins (TNP1 and TNP2). Then, transition proteins drive the recruitment and processing of protamines, which are responsible for histone eviction. Also expressed maternally and is present in the female pronucleus, suggesting a similar role in protamine replacement by nucleosomes at fertilization. Core component of nucleosome. Nucleosomes wrap and compact DNA into chromatin, limiting DNA accessibility to the cellular machineries which require DNA as a template. Histones thereby play a central role in transcription regulation, DNA repair, DNA replication and chromosomal stability. DNA accessibility is regulated via a complex set of post-translational modifications of histones, also called histone code, and nucleosome remodeling. The polypeptide is Histone H2B type 1-A (Mus musculus (Mouse)).